The primary structure comprises 477 residues: Aspartyl/glutamyl-tRNA(Asn/Gln) amidotransferase subunit B (477 aa).

This sequence belongs to the GatB/GatE family. GatB subfamily. Heterotrimer of A, B and C subunits.

The catalysed reaction is L-glutamyl-tRNA(Gln) + L-glutamine + ATP + H2O = L-glutaminyl-tRNA(Gln) + L-glutamate + ADP + phosphate + H(+). It carries out the reaction L-aspartyl-tRNA(Asn) + L-glutamine + ATP + H2O = L-asparaginyl-tRNA(Asn) + L-glutamate + ADP + phosphate + 2 H(+). Allows the formation of correctly charged Asn-tRNA(Asn) or Gln-tRNA(Gln) through the transamidation of misacylated Asp-tRNA(Asn) or Glu-tRNA(Gln) in organisms which lack either or both of asparaginyl-tRNA or glutaminyl-tRNA synthetases. The reaction takes place in the presence of glutamine and ATP through an activated phospho-Asp-tRNA(Asn) or phospho-Glu-tRNA(Gln). The polypeptide is Aspartyl/glutamyl-tRNA(Asn/Gln) amidotransferase subunit B (Lawsonia intracellularis (strain PHE/MN1-00)).